Here is a 139-residue protein sequence, read N- to C-terminus: Fluoroacetyl-CoA thioesterase (139 aa).

Residues 40–50 and Gly69 each bind substrate; that span reads FATGFMVGLME. Catalysis depends on residues Thr42 and Glu50. CoA is bound by residues Gly69 and 76-77; that span reads HT. His76 is an active-site residue. Position 120 (Arg120) interacts with substrate.

In terms of assembly, homodimer.

The enzyme catalyses fluoroacetyl-CoA + H2O = fluoroacetate + CoA + H(+). Hydrolyzes fluoroacetyl-CoA before it can react with citrate synthase, and thus confers fluoroacetate resistance. Cannot use acetyl-CoA as substrate. The sequence is that of Fluoroacetyl-CoA thioesterase (flK) from Streptantibioticus cattleyicolor (Streptomyces cattleya).